The following is a 658-amino-acid chain: Glycogen debranching enzyme (658 aa).

The active-site Nucleophile is D336. E371 acts as the Proton donor in catalysis. Residues 459-484 (EANGEENRDGTNSNYSDNHGKEGLGG) are disordered.

This sequence belongs to the glycosyl hydrolase 13 family.

The enzyme catalyses Hydrolysis of (1-&gt;6)-alpha-D-glucosidic linkages to branches with degrees of polymerization of three or four glucose residues in limit dextrin.. The protein operates within glycan degradation; glycogen degradation. Its function is as follows. Removes maltotriose and maltotetraose chains that are attached by 1,6-alpha-linkage to the limit dextrin main chain, generating a debranched limit dextrin. This Salmonella enteritidis PT4 (strain P125109) protein is Glycogen debranching enzyme.